The primary structure comprises 884 residues: Translation initiation factor IF-2 (884 aa).

The segment at Val93 to Gln288 is disordered. A compositionally biased stretch (basic and acidic residues) spans Glu99–Trp209. Residues Gln216–His229 show a composition bias toward polar residues. The segment covering Arg231–Arg246 has biased composition (basic and acidic residues). Positions Ser247–Asn261 are enriched in basic residues. Basic and acidic residues predominate over residues Lys262–Ala275. A tr-type G domain is found at His383–Lys552. The G1 stretch occupies residues Gly392–Thr399. Residue Gly392–Thr399 participates in GTP binding. The G2 stretch occupies residues Gly417–His421. The tract at residues Asp438 to Gly441 is G3. Residues Asp438–His442 and Asn492–Asp495 contribute to the GTP site. Residues Asn492 to Asp495 are G4. The G5 stretch occupies residues Ser528–Lys530.

It belongs to the TRAFAC class translation factor GTPase superfamily. Classic translation factor GTPase family. IF-2 subfamily.

Its subcellular location is the cytoplasm. In terms of biological role, one of the essential components for the initiation of protein synthesis. Protects formylmethionyl-tRNA from spontaneous hydrolysis and promotes its binding to the 30S ribosomal subunits. Also involved in the hydrolysis of GTP during the formation of the 70S ribosomal complex. The protein is Translation initiation factor IF-2 of Yersinia pestis bv. Antiqua (strain Antiqua).